Here is a 338-residue protein sequence, read N- to C-terminus: Heat-inducible transcription repressor HrcA (338 aa).

This sequence belongs to the HrcA family.

In terms of biological role, negative regulator of class I heat shock genes (grpE-dnaK-dnaJ and groELS operons). Prevents heat-shock induction of these operons. The polypeptide is Heat-inducible transcription repressor HrcA (Bacillus cereus (strain ATCC 10987 / NRS 248)).